Reading from the N-terminus, the 141-residue chain is Cytochrome c-type biogenesis protein CcmE (141 aa).

The Cytoplasmic segment spans residues M1–R7. Residues I8–E28 traverse the membrane as a helical; Signal-anchor for type II membrane protein segment. The Periplasmic portion of the chain corresponds to L29 to S141. 2 residues coordinate heme: H121 and Y125.

The protein belongs to the CcmE/CycJ family.

The protein localises to the cell inner membrane. Functionally, heme chaperone required for the biogenesis of c-type cytochromes. Transiently binds heme delivered by CcmC and transfers the heme to apo-cytochromes in a process facilitated by CcmF and CcmH. This is Cytochrome c-type biogenesis protein CcmE from Anaplasma phagocytophilum (strain HZ).